The following is a 118-amino-acid chain: Phosphoribosyl-AMP cyclohydrolase (118 aa).

Asp85 is a Mg(2+) binding site. Cys86 provides a ligand contact to Zn(2+). 2 residues coordinate Mg(2+): Asp87 and Asp89. The Zn(2+) site is built by Cys102 and Cys109.

The protein belongs to the PRA-CH family. In terms of assembly, homodimer. It depends on Mg(2+) as a cofactor. Zn(2+) serves as cofactor.

It localises to the cytoplasm. The enzyme catalyses 1-(5-phospho-beta-D-ribosyl)-5'-AMP + H2O = 1-(5-phospho-beta-D-ribosyl)-5-[(5-phospho-beta-D-ribosylamino)methylideneamino]imidazole-4-carboxamide. Its pathway is amino-acid biosynthesis; L-histidine biosynthesis; L-histidine from 5-phospho-alpha-D-ribose 1-diphosphate: step 3/9. Catalyzes the hydrolysis of the adenine ring of phosphoribosyl-AMP. This Sulfurisphaera tokodaii (strain DSM 16993 / JCM 10545 / NBRC 100140 / 7) (Sulfolobus tokodaii) protein is Phosphoribosyl-AMP cyclohydrolase.